The sequence spans 355 residues: U5 small nuclear ribonucleoprotein 40 kDa protein (355 aa).

7 WD repeats span residues 60–99 (GHKG…INYS), 103–142 (GHKG…LIKR), 145–185 (EHSG…STHL), 187–226 (QHKY…DPLY), 230–269 (SHQD…PPNR), 280–319 (NFEK…LQYC), and 322–355 (GHSG…EIKP).

As to quaternary structure, component of the pre-catalytic and catalytic spliceosome complexes. Component of the postcatalytic spliceosome P complex. Part of the U5 snRNP complex. Component of the U4/U6-U5 tri-snRNP complex.

The protein resides in the nucleus. Functionally, required for pre-mRNA splicing as component of the activated spliceosome. Component of the U5 small nuclear ribonucleoprotein (snRNP) complex and the U4/U6-U5 tri-snRNP complex, building blocks of the spliceosome. In Dictyostelium discoideum (Social amoeba), this protein is U5 small nuclear ribonucleoprotein 40 kDa protein (snrnp40).